Reading from the N-terminus, the 207-residue chain is ATP-dependent Clp protease proteolytic subunit 1 (207 aa).

The Nucleophile role is filled by Ser103. The active site involves His128.

Belongs to the peptidase S14 family. As to quaternary structure, fourteen ClpP subunits assemble into 2 heptameric rings which stack back to back to give a disk-like structure with a central cavity, resembling the structure of eukaryotic proteasomes.

The protein localises to the cytoplasm. It carries out the reaction Hydrolysis of proteins to small peptides in the presence of ATP and magnesium. alpha-casein is the usual test substrate. In the absence of ATP, only oligopeptides shorter than five residues are hydrolyzed (such as succinyl-Leu-Tyr-|-NHMec, and Leu-Tyr-Leu-|-Tyr-Trp, in which cleavage of the -Tyr-|-Leu- and -Tyr-|-Trp bonds also occurs).. Cleaves peptides in various proteins in a process that requires ATP hydrolysis. Has a chymotrypsin-like activity. Plays a major role in the degradation of misfolded proteins. This is ATP-dependent Clp protease proteolytic subunit 1 from Synechococcus sp. (strain CC9605).